A 419-amino-acid chain; its full sequence is N-acylglucosamine 2-epimerase (419 aa).

A leucine-zipper region spans residues 185-206 (LLSLVEQLGEEDEELTNMYAEL). Serine 418 carries the post-translational modification Phosphoserine.

This sequence belongs to the N-acylglucosamine 2-epimerase family. In terms of assembly, homodimer. Forms a heterodimer with renin and inhibits its activity.

The catalysed reaction is an N-acyl-D-glucosamine = an N-acyl-D-mannosamine. It functions in the pathway amino-sugar metabolism; N-acetylneuraminate degradation. In terms of biological role, catalyzes the interconversion of N-acetylglucosamine to N-acetylmannosamine. Involved in the N-glycolylneuraminic acid (Neu5Gc) degradation pathway. In Mus musculus (Mouse), this protein is N-acylglucosamine 2-epimerase (Renbp).